A 21-amino-acid chain; its full sequence is Granulitoxin (21 aa).

Residues 1–21 (AKTGILDSDGPTVAGNSLSGT) are disordered.

Its subcellular location is the secreted. It is found in the nematocyst. Injection into mice produces severe neurotoxic effects such as circular movements, aggressive behavior, dyspnea, tonic-clonic convulsion and death. The protein is Granulitoxin of Bunodosoma cangicum (Sea anemone).